We begin with the raw amino-acid sequence, 166 residues long: Protein-export protein SecB (166 aa).

This sequence belongs to the SecB family. In terms of assembly, homotetramer, a dimer of dimers. One homotetramer interacts with 1 SecA dimer.

Its subcellular location is the cytoplasm. Functionally, one of the proteins required for the normal export of preproteins out of the cell cytoplasm. It is a molecular chaperone that binds to a subset of precursor proteins, maintaining them in a translocation-competent state. It also specifically binds to its receptor SecA. The sequence is that of Protein-export protein SecB from Actinobacillus succinogenes (strain ATCC 55618 / DSM 22257 / CCUG 43843 / 130Z).